The sequence spans 475 residues: 23S rRNA (uracil(1939)-C(5))-methyltransferase RlmD (475 aa).

In terms of domain architecture, TRAM spans 1 to 76 (MHRGDKPVNI…SRFSKAKVRE (76 aa)). The [4Fe-4S] cluster site is built by cysteine 89, cysteine 95, cysteine 98, and cysteine 178. Residues glutamine 299, phenylalanine 328, asparagine 333, glutamate 349, aspartate 377, and aspartate 398 each coordinate S-adenosyl-L-methionine. Cysteine 431 functions as the Nucleophile in the catalytic mechanism.

It belongs to the class I-like SAM-binding methyltransferase superfamily. RNA M5U methyltransferase family. RlmD subfamily.

The enzyme catalyses uridine(1939) in 23S rRNA + S-adenosyl-L-methionine = 5-methyluridine(1939) in 23S rRNA + S-adenosyl-L-homocysteine + H(+). Catalyzes the formation of 5-methyl-uridine at position 1939 (m5U1939) in 23S rRNA. The sequence is that of 23S rRNA (uracil(1939)-C(5))-methyltransferase RlmD from Polynucleobacter necessarius subsp. necessarius (strain STIR1).